Consider the following 456-residue polypeptide: Adenylosuccinate synthetase isozyme 1 (456 aa).

The disordered stretch occupies residues 1 to 30 (MSSGWSQNDHRSYSNPPPVSGKRPRNDSGN). Residues 41–47 (GDEGKGK) and 69–71 (GHT) contribute to the GTP site. Catalysis depends on D42, which acts as the Proton acceptor. Mg(2+) contacts are provided by D42 and G69. A substrate-binding site is contributed by D42. IMP contacts are provided by residues 42–45 (DEGK) and 67–70 (NAGH). H70 functions as the Proton donor in the catalytic mechanism. Phosphoserine is present on S130. T162, R176, N255, T270, and R334 together coordinate IMP. 330-336 (VTTGRKR) provides a ligand contact to substrate. Residues R336, 362–364 (KLD), and 444–447 (GVGK) each bind GTP.

It belongs to the adenylosuccinate synthetase family. As to quaternary structure, homodimer. Mg(2+) serves as cofactor.

The protein localises to the cytoplasm. The enzyme catalyses IMP + L-aspartate + GTP = N(6)-(1,2-dicarboxyethyl)-AMP + GDP + phosphate + 2 H(+). Its pathway is purine metabolism; AMP biosynthesis via de novo pathway; AMP from IMP: step 1/2. Functionally, component of the purine nucleotide cycle (PNC), which interconverts IMP and AMP to regulate the nucleotide levels in various tissues, and which contributes to glycolysis and ammoniagenesis. Catalyzes the first committed step in the biosynthesis of AMP from IMP. This Danio rerio (Zebrafish) protein is Adenylosuccinate synthetase isozyme 1 (adss1).